A 640-amino-acid polypeptide reads, in one-letter code: Isoniazid-induced protein IniA (640 aa).

A helical transmembrane segment spans residues 497–519 (IGMLSSVVGLGLFNPLSVGAGLI). The stretch at 560-628 (RDRLKMIQRL…QVNDNLAGLE (69 aa)) forms a coiled coil.

As to quaternary structure, forms multimeric structures containing a central pore.

Its subcellular location is the cell membrane. Functionally, participates in the development of tolerance to both isoniazid and ethambutol. May function through a MDR-pump like mechanism, although it does not appear to directly transport isoniazid from the cell. The sequence is that of Isoniazid-induced protein IniA (iniA) from Mycobacterium tuberculosis (strain CDC 1551 / Oshkosh).